Consider the following 252-residue polypeptide: Protein TRANSPARENT TESTA 16 (252 aa).

Residues 1–61 (MGRGKIEIKK…GKLSEFCSEQ (61 aa)) enclose the MADS-box domain. A K-box domain is found at 86–176 (QEQLHHEMEL…YRWLHEHRAA (91 aa)). Residues 121–174 (NELDGLERQLEHSVLKVRERKNELMQQQLENLSRKRRMLEEDNNNMYRWLHEHR) are a coiled coil.

In terms of assembly, interacts with AP1/AGL7, SEP1/AGL2, SEP2/AGL4, SEP3/AGL9 and AGL3/SEP4. Expressed in buds, flowers and immature seeds, but not in roots, stems, leaves, seedlings or siliques valves. Expression in seed coat is confined to the endothelium layer.

It localises to the nucleus. In terms of biological role, transcription factor involved in the developmental regulation of the endothelium and in the accumulation of proanthocyanidins (PAs) or condensed tannins which give the seed its brown pigmentation after oxidation. Necessary for the normal activation of the BANYULS promoter in the endothelium body. Is required, together with AGL11/STK for the maternal control of endothelium formation, which is essential for female gametophyte development and fertilization, and seed formation. Interacts genetically with AGL1/SHP1 and AGL5/SHP2 in a partially antagonistic manner and represses AGL1/SHP1, AGL5/SHP2, and AGL8/FUL during flower development. Is essential for the coordination of cell divisions in ovule, seed coat development and endosperm formation. Mediates the crosstalk between endothelium and nucellus to ensure proper seed formation. Functions redundantly with AGL63/GOA to repress nucellus growth and promote its degeneration. Represses the negative regulator of autophagy and programmed cell death HVA22D in the proximal nucellus. Binds specifically to the CArG box DNA sequence 5'-CC (A/T)6 GG-3'. The chain is Protein TRANSPARENT TESTA 16 (TT16) from Arabidopsis thaliana (Mouse-ear cress).